The chain runs to 745 residues: Serine/threonine-protein kinase BUR1 (745 aa).

Positions 1–21 are disordered; it reads MSVIAGHHVPRSNDQRQYDTP. Residues 44–349 form the Protein kinase domain; it reads YEVIEKLGQG…ALDALNHKFF (306 aa). ATP contacts are provided by residues 50 to 58 and K73; that span reads LGQGTFGVV. The Proton acceptor role is filled by D179. 3 stretches are compositionally biased toward basic and acidic residues: residues 380 to 406, 428 to 475, and 493 to 508; these read DKEQ…RYNA, DYID…DIQN, and KLRE…KKYD. The disordered stretch occupies residues 380–701; it reads DKEQAVSELK…EVSDLEEDSD (322 aa). The span at 516 to 534 shows a compositional bias: low complexity; that stretch reads SRGSKSPSPSKLSSISQSK. The span at 547–557 shows a compositional bias: basic and acidic residues; that stretch reads ASRESSLERKQ. Polar residues-rich tracts occupy residues 558–567 and 586–598; these read VSNGIRTTTD and LTSN…PTRN. Over residues 599-631 the composition is skewed to basic and acidic residues; the sequence is KSVERPKDLEKPTNGVTEDRNKKPVLEEKKEVV. Positions 632–660 are enriched in low complexity; the sequence is KPNLAIPKIKKSSSLVSLSSRSSTTPVIS. Polar residues predominate over residues 661–674; sequence NPSKVTKRAASSVT. Residues 692–701 show a composition bias toward acidic residues; the sequence is EVSDLEEDSD.

The protein belongs to the protein kinase superfamily. CMGC Ser/Thr protein kinase family. CDC2/CDKX subfamily.

It is found in the nucleus. The enzyme catalyses L-seryl-[protein] + ATP = O-phospho-L-seryl-[protein] + ADP + H(+). It catalyses the reaction L-threonyl-[protein] + ATP = O-phospho-L-threonyl-[protein] + ADP + H(+). It carries out the reaction [DNA-directed RNA polymerase] + ATP = phospho-[DNA-directed RNA polymerase] + ADP + H(+). Serine/threonine-protein kinase involved in transcription regulation. Phosphorylates the UBC2/RAD6 ubiquitin-conjugating enzyme (E2), leading to monoubiquitination of histone H2B and the silencing of telomeric-associated genes. Also required for histone H3 methylation. Necessary for the recovery from pheromone-induced growth arrest in the cell cycle G1 phase. Required for pseudohyphal growth and virulence in mice. The sequence is that of Serine/threonine-protein kinase BUR1 (CRK1) from Candida albicans (strain SC5314 / ATCC MYA-2876) (Yeast).